Reading from the N-terminus, the 587-residue chain is NADH-quinone oxidoreductase subunit C/D (587 aa).

The interval 1 to 178 (MAAPTTEHAE…EPFSLPDDVQ (178 aa)) is NADH dehydrogenase I subunit C. The interval 202–587 (DFLFLNLGPN…IDFVMADVDR (386 aa)) is NADH dehydrogenase I subunit D.

It in the N-terminal section; belongs to the complex I 30 kDa subunit family. The protein in the C-terminal section; belongs to the complex I 49 kDa subunit family. As to quaternary structure, NDH-1 is composed of 13 different subunits. Subunits NuoB, CD, E, F, and G constitute the peripheral sector of the complex.

The protein resides in the cell inner membrane. The catalysed reaction is a quinone + NADH + 5 H(+)(in) = a quinol + NAD(+) + 4 H(+)(out). Functionally, NDH-1 shuttles electrons from NADH, via FMN and iron-sulfur (Fe-S) centers, to quinones in the respiratory chain. The immediate electron acceptor for the enzyme in this species is believed to be ubiquinone. Couples the redox reaction to proton translocation (for every two electrons transferred, four hydrogen ions are translocated across the cytoplasmic membrane), and thus conserves the redox energy in a proton gradient. The polypeptide is NADH-quinone oxidoreductase subunit C/D (Methylococcus capsulatus (strain ATCC 33009 / NCIMB 11132 / Bath)).